The primary structure comprises 65 residues: Large ribosomal subunit protein bL32 (65 aa).

The protein belongs to the bacterial ribosomal protein bL32 family.

The protein is Large ribosomal subunit protein bL32 of Phytoplasma australiense.